Consider the following 837-residue polypeptide: Striatin-interacting protein 1 (837 aa).

Met-1 carries the N-acetylmethionine modification. Residues 1-67 (MEPAAGTPGP…DSEGYSESPD (67 aa)) form a disordered region. Over residues 18–35 (PQPPPPPPPATAQPPPGA) the composition is skewed to pro residues. The span at 47 to 60 (KAREFNRNQRKDSE) shows a compositional bias: basic and acidic residues. Ser-59, Ser-335, and Ser-339 each carry phosphoserine. Positions 336–423 (PPASASDLIE…DRLTCPKGLP (88 aa)) are disordered. Basic and acidic residues predominate over residues 356–377 (KALIKQDNLDAFNERDPYKADD). Residues 378-391 (SREEEEENDDDNSL) show a composition bias toward acidic residues. Ser-788 bears the Phosphoserine mark. The tract at residues 796–837 (DNCLQSVLGQRVDLPEDFQMNYDLWLEREVFSKPISWEELLQ) is required for STRIPAK core complex formation.

Belongs to the STRIP family. As to quaternary structure, part of the core of STRIPAK complexes composed of PP2A catalytic and scaffolding subunits, the striatins (PP2A regulatory subunits), the striatin-associated proteins MOB4, STRIP1 and STRIP2, PDCD10 and members of the STE20 kinases, such as STK24 and STK26. The STRIPAK complex can be extended by adapter proteins such as SLMAP:SIKE1, CTTNBP2 or CTTNBP2NL. Interacts with CDC42BPB. Interacts with CTTNBP2NL.

It is found in the cytoplasm. Functionally, plays a role in the regulation of cell morphology and cytoskeletal organization. Required in the cortical actin filament dynamics and cell shape. Part of the striatin-interacting phosphatase and kinase (STRIPAK) complexes. STRIPAK complexes have critical roles in protein (de)phosphorylation and are regulators of multiple signaling pathways including Hippo, MAPK, nuclear receptor and cytoskeleton remodeling. Different types of STRIPAK complexes are involved in a variety of biological processes such as cell growth, differentiation, apoptosis, metabolism and immune regulation. This chain is Striatin-interacting protein 1 (STRIP1), found in Bos taurus (Bovine).